Here is a 544-residue protein sequence, read N- to C-terminus: Chaperonin GroEL (544 aa).

Residues 30–33, Lys-51, 87–91, Gly-415, 478–480, and Asp-494 contribute to the ATP site; these read TLGP, DGTTT, and DVA. Residues 524-544 form a disordered region; the sequence is PEKEKKPATPAGAGGMGDMEY. Residues 535–544 are compositionally biased toward gly residues; sequence GAGGMGDMEY.

The protein belongs to the chaperonin (HSP60) family. As to quaternary structure, forms a cylinder of 14 subunits composed of two heptameric rings stacked back-to-back. Interacts with the co-chaperonin GroES.

The protein resides in the cytoplasm. The enzyme catalyses ATP + H2O + a folded polypeptide = ADP + phosphate + an unfolded polypeptide.. Functionally, together with its co-chaperonin GroES, plays an essential role in assisting protein folding. The GroEL-GroES system forms a nano-cage that allows encapsulation of the non-native substrate proteins and provides a physical environment optimized to promote and accelerate protein folding. This is Chaperonin GroEL from Methylacidiphilum infernorum (isolate V4) (Methylokorus infernorum (strain V4)).